A 106-amino-acid chain; its full sequence is SH3 domain-binding glutamic acid-rich-like protein 2-A (106 aa).

The SH3-binding motif lies at 61-67; it reads QGNPLPP.

It belongs to the SH3BGR family.

The protein localises to the nucleus. The polypeptide is SH3 domain-binding glutamic acid-rich-like protein 2-A (sh3bgrl2-a) (Xenopus laevis (African clawed frog)).